A 193-amino-acid chain; its full sequence is MAEKSIVQEAKDIQLAMELISLGARLQMLESETQLSRGRLIKLYKELRGSPPPKGMLPFSTDWFMTWEQNIHSSMFYNAYSFLIKNGQCSGVKAVIKSYRLYLEQCAPQSDSPLLALTRAWTLVRFVDSGMLQLSSCNCCKGMFIYPRLHQPKNSFVCSLCQPPSRAVKRLKLSQNLADIIPRLLDEQVKHAV.

Zn(2+)-binding residues include Cys-137, Cys-140, Cys-158, and Cys-161.

It belongs to the FlhC family. In terms of assembly, heterohexamer composed of two FlhC and four FlhD subunits. Each FlhC binds a FlhD dimer, forming a heterotrimer, and a hexamer assembles by dimerization of two heterotrimers. Zn(2+) serves as cofactor.

It localises to the cytoplasm. Functionally, functions in complex with FlhD as a master transcriptional regulator that regulates transcription of several flagellar and non-flagellar operons by binding to their promoter region. Activates expression of class 2 flagellar genes, including fliA, which is a flagellum-specific sigma factor that turns on the class 3 genes. Also regulates genes whose products function in a variety of physiological pathways. This is Flagellar transcriptional regulator FlhC from Pectobacterium carotovorum (Erwinia carotovora).